Consider the following 394-residue polypeptide: Putative transporter AraJ (394 aa).

Over Met1–Val4 the chain is Cytoplasmic. The chain crosses the membrane as a helical span at residues Ile5–Thr27. The Periplasmic segment spans residues Glu28–Gly41. The helical transmembrane segment at His42 to Ser63 threads the bilayer. The Cytoplasmic segment spans residues Arg64–His69. A helical membrane pass occupies residues Ile70–Ser89. Residues Ser90–Met93 lie on the Periplasmic side of the membrane. Residues Leu94 to Leu116 form a helical membrane-spanning segment. Residues Ser117 to Ala128 are Cytoplasmic-facing. Residues Val129–Ser151 traverse the membrane as a helical segment. At Gln152–Ser155 the chain is on the periplasmic side. The chain crosses the membrane as a helical span at residues Trp156–Val178. Topologically, residues Pro179–Ser198 are cytoplasmic. Residues Pro199 to Tyr221 form a helical membrane-spanning segment. At Val222–Thr235 the chain is on the periplasmic side. Residues Ala236 to Ser255 traverse the membrane as a helical segment. Residues Gly256–Arg261 are Cytoplasmic-facing. The chain crosses the membrane as a helical span at residues Tyr262 to Phe284. Residues Cys285–Leu293 lie on the Periplasmic side of the membrane. A helical transmembrane segment spans residues Ile294 to Gln316. Topologically, residues Asn317–Glu322 are cytoplasmic. The chain crosses the membrane as a helical span at residues Leu323–Tyr342. The Periplasmic portion of the chain corresponds to Cys343–Gly351. A helical membrane pass occupies residues Leu352–Leu374. Residues Tyr375 to Gly394 are Cytoplasmic-facing.

This sequence belongs to the major facilitator superfamily.

It localises to the cell inner membrane. Its function is as follows. May be involved in either the transport or processing of arabinose polymers. The protein is Putative transporter AraJ (araJ) of Escherichia coli (strain K12).